The primary structure comprises 544 residues: Lysophosphatidylcholine acyltransferase 2 (544 aa).

The Cytoplasmic segment spans residues 1–58 (MNRCAEAAAVAATVPGSGVGDAGLRPPMVPRQASFFPPPVPNPFVQQTTISASRRLQM). The helical; Signal-anchor for type II membrane protein transmembrane segment at 59–79 (FLLGIILLPVRALLVGIILLL) threads the bilayer. The Lumenal portion of the chain corresponds to 80–544 (AWPFAVISTA…EEGTSDKKVD (465 aa)). Positions 146-151 (HSTFFD) match the HXXXXD motif motif. The EGTC motif motif lies at 220–223 (EGTC). 2 consecutive EF-hand domains span residues 391–426 (PVSD…LCNP) and 428–463 (NTEE…SLGV). Positions 404, 406, 408, 410, 415, 441, 443, 445, 447, and 452 each coordinate Ca(2+). Over residues 520 to 532 (TAPSVASNKVSPE) the composition is skewed to polar residues. Positions 520-544 (TAPSVASNKVSPESQEEGTSDKKVD) are disordered.

It belongs to the 1-acyl-sn-glycerol-3-phosphate acyltransferase family. As to expression, highest expression is found in resident macrophages and casein-induced neutrophils followed by skin, colon, spleen and thioglycollate-induced macrophages. Detected in erythroleukemic cells but not in reticulocytes.

Its subcellular location is the endoplasmic reticulum membrane. The protein resides in the golgi apparatus membrane. It localises to the cell membrane. It is found in the lipid droplet. It carries out the reaction a 1-acyl-sn-glycero-3-phosphocholine + an acyl-CoA = a 1,2-diacyl-sn-glycero-3-phosphocholine + CoA. The enzyme catalyses a 1-O-alkyl-sn-glycero-3-phosphocholine + acetyl-CoA = a 1-O-alkyl-2-acetyl-sn-glycero-3-phosphocholine + CoA. The catalysed reaction is a 1-acyl-sn-glycero-3-phosphate + an acyl-CoA = a 1,2-diacyl-sn-glycero-3-phosphate + CoA. It catalyses the reaction a 1-O-(1Z-alkenyl)-sn-glycero-3-phosphocholine + an acyl-CoA = a 1-O-(1Z-alkenyl)-2-acyl-sn-glycero-3-phosphocholine + CoA. It carries out the reaction 1-O-octadecyl-sn-glycero-3-phosphocholine + acetyl-CoA = 1-O-octadecyl-2-acetyl-sn-glycero-3-phosphocholine + CoA. The enzyme catalyses 1-hexadecanoyl-sn-glycero-3-phosphocholine + acetyl-CoA = 1-hexadecanoyl-2-acetyl-sn-glycero-3-phosphocholine + CoA. The catalysed reaction is 1-octadecanoyl-sn-glycero-3-phosphocholine + acetyl-CoA = 1-octadecanoyl-2-acetyl-sn-glycero-3-phosphocholine + CoA. It catalyses the reaction a 1-O-(1Z-alkenyl)-sn-glycero-3-phosphocholine + acetyl-CoA = 1-O-(1Z)-alkenyl-2-acetyl-sn-glycero-3-phosphocholine + CoA. It carries out the reaction 1-O-hexadecyl-sn-glycero-3-phosphocholine + acetyl-CoA = 1-O-hexadecyl-2-acetyl-sn-glycero-3-phosphocholine + CoA. The enzyme catalyses 1-O-octadecyl-sn-glycero-3-phosphocholine + (5Z,8Z,11Z,14Z)-eicosatetraenoyl-CoA = 1-O-octadecyl-2-(5Z,8Z,11Z,14Z)-eicosatetraenoyl-sn-glycero-3-phosphocholine + CoA. The catalysed reaction is 1-hexadecanoyl-sn-glycero-3-phosphate + (9Z)-octadecenoyl-CoA = 1-hexadecanoyl-2-(9Z-octadecenoyl)-sn-glycero-3-phosphate + CoA. It catalyses the reaction 1-(9Z-octadecenoyl)-sn-glycero-3-phosphate + (9Z)-octadecenoyl-CoA = 1,2-di-(9Z-octadecenoyl)-sn-glycero-3-phosphate + CoA. It carries out the reaction 1-(9Z-octadecenoyl)-sn-glycero-3-phosphate + hexadecanoyl-CoA = 1-(9Z)-octadecenoyl-2-hexadecanoyl-sn-glycero-3-phosphate + CoA. The enzyme catalyses 1-heptadecanoyl-sn-glycero-3-phosphate + (9Z)-octadecenoyl-CoA = 1-heptadecanoyl-2-(9Z)-octadecenoyl-sn-glycero-3-phosphate + CoA. The catalysed reaction is 1-octadecanoyl-sn-glycero-3-phosphate + (9Z)-octadecenoyl-CoA = 1-octadecanoyl-2-(9Z-octadecenoyl)-sn-glycero-3-phosphate + CoA. It catalyses the reaction heptadecanoyl-CoA + 1-(9Z-octadecenoyl)-sn-glycero-3-phosphate = 1-(9Z)-octadecenoyl-2-heptadecanoyl-sn-glycero-3-phosphate + CoA. It carries out the reaction 1-(9Z-octadecenoyl)-sn-glycero-3-phosphate + (9Z,12Z)-octadecadienoyl-CoA = 1-(9Z)-octadecenoyl-2-(9Z,12Z)-octadecadienoyl-sn-glycero-3-phosphate + CoA. The enzyme catalyses 1-(9Z-octadecenoyl)-sn-glycero-3-phosphate + tetradecanoyl-CoA = 1-(9Z)-octadecenoyl-2-tetradecanoyl-sn-glycero-3-phosphate + CoA. The catalysed reaction is pentadecanoyl-CoA + 1-(9Z-octadecenoyl)-sn-glycero-3-phosphate = 1-(9Z)-octadecenoyl-2-pentadecanoyl-sn-glycero-3-phosphate + CoA. It catalyses the reaction nonadecanoyl-CoA + 1-(9Z-octadecenoyl)-sn-glycero-3-phosphate = 1-(9Z)-octadecenoyl-2-nonadecanoyl-sn-glycero-3-phosphate + CoA. It carries out the reaction 1-hexadecanoyl-sn-glycero-3-phosphocholine + (9Z)-octadecenoyl-CoA = 1-hexadecanoyl-2-(9Z-octadecenoyl)-sn-glycero-3-phosphocholine + CoA. The protein operates within lipid metabolism; phospholipid metabolism. Its activity is regulated as follows. Acetyltransferase activity is increased following acute inflammatory stimulation by lipopolysaccharide (LPS). Acyltransferase activity is unchanged. Exhibits both acyltransferase and acetyltransferase activities. Activity is calcium-dependent. Catalyzes the conversion of lysophosphatidylcholine (1-acyl-sn-glycero-3-phosphocholine or LPC) into phosphatidylcholine (1,2-diacyl-sn-glycero-3-phosphocholine or PC). Catalyzes the conversion 1-acyl-sn-glycerol-3-phosphate (lysophosphatidic acid or LPA) into 1,2-diacyl-sn-glycerol-3-phosphate (phosphatidic acid or PA) by incorporating an acyl moiety at the sn-2 position of the glycerol backbone. Involved in platelet-activating factor (PAF) biosynthesis by catalyzing the conversion of the PAF precursor, 1-O-alkyl-sn-glycero-3-phosphocholine (lyso-PAF) into 1-O-alkyl-2-acetyl-sn-glycero-3-phosphocholine (PAF). Also converts lyso-PAF to 1-O-alkyl-2-acyl-sn-glycero-3-phosphocholine (PC), a major component of cell membranes and a PAF precursor. Under resting conditions, acyltransferase activity is preferred. Upon acute inflammatory stimulus, acetyltransferase activity is enhanced and PAF synthesis increases. Involved in the regulation of lipid droplet number and size. The polypeptide is Lysophosphatidylcholine acyltransferase 2 (Lpcat2) (Mus musculus (Mouse)).